The chain runs to 254 residues: Triosephosphate isomerase (254 aa).

Residue 12-14 (NWK) coordinates substrate. Catalysis depends on His-99, which acts as the Electrophile. The active-site Proton acceptor is Glu-169. Substrate is bound by residues Gly-175, Ser-214, and 235–236 (GG).

This sequence belongs to the triosephosphate isomerase family. In terms of assembly, homodimer.

It is found in the cytoplasm. It catalyses the reaction D-glyceraldehyde 3-phosphate = dihydroxyacetone phosphate. The protein operates within carbohydrate biosynthesis; gluconeogenesis. Its pathway is carbohydrate degradation; glycolysis; D-glyceraldehyde 3-phosphate from glycerone phosphate: step 1/1. Its function is as follows. Involved in the gluconeogenesis. Catalyzes stereospecifically the conversion of dihydroxyacetone phosphate (DHAP) to D-glyceraldehyde-3-phosphate (G3P). This Bartonella quintana (strain Toulouse) (Rochalimaea quintana) protein is Triosephosphate isomerase.